A 338-amino-acid chain; its full sequence is Glyceraldehyde-3-phosphate dehydrogenase GAPC2, cytosolic (338 aa).

NAD(+)-binding positions include 15–16 (RI), D37, and R84. A D-glyceraldehyde 3-phosphate-binding site is contributed by 155 to 157 (SCT). C156 serves as the catalytic Nucleophile. C156 bears the S-glutathionyl cysteine; transient; alternate mark. An S-nitrosocysteine; transient; alternate modification is found at C156. C160 is modified (S-nitrosocysteine; transient). D-glyceraldehyde 3-phosphate-binding positions include T186, 215–216 (TG), and R238. N320 provides a ligand contact to NAD(+).

The protein belongs to the glyceraldehyde-3-phosphate dehydrogenase family. Homotetramer. Interacts with PLDDELTA. Binds to DPB3-1/NF-YC10 in response to heat-stress; this interaction promotes DPB3-1/NF-YC10 DNA-binding ability to its target promoter. Post-translationally, S-glutathionylation at Cys-156 in the presence of oxidized glutathione (GSSG). S-nitrosylation at Cys-156 and Cys-160 in the presence of S-nitrosoglutathione (GSNO) or sodium nitroprusside (SNP). These reactions may be both a protective mechanism against irreversible oxidation and a mean to store inhibited enzyme in a recoverable form.

The protein resides in the cytoplasm. The protein localises to the nucleus. The catalysed reaction is D-glyceraldehyde 3-phosphate + phosphate + NAD(+) = (2R)-3-phospho-glyceroyl phosphate + NADH + H(+). It functions in the pathway carbohydrate degradation; glycolysis; pyruvate from D-glyceraldehyde 3-phosphate: step 1/5. With respect to regulation, inhibition by oxidized glutathione (GSSG), S-nitrosoglutathione (GSNO) and hydrogen peroxide. Functionally, key enzyme in glycolysis that catalyzes the first step of the pathway by converting D-glyceraldehyde 3-phosphate (G3P) into 3-phospho-D-glyceroyl phosphate. Essential for the maintenance of cellular ATP levels and carbohydrate metabolism. Binds DNA in vitro. Together with DNA polymerase II subunit B3-1 (DPB3-1) and GAPC1, enhances heat tolerance and promotes the expression of heat-inducible genes. The protein is Glyceraldehyde-3-phosphate dehydrogenase GAPC2, cytosolic of Arabidopsis thaliana (Mouse-ear cress).